A 641-amino-acid polypeptide reads, in one-letter code: Macrolide export ATP-binding/permease protein MacB (641 aa).

The ABC transporter domain occupies 2 to 236 (IFLKNICKNI…LTLKTMSKEK (235 aa)). 34 to 41 (GQSGSGKT) is an ATP binding site. The next 4 helical transmembrane spans lie at 265 to 285 (ILTMLGIIIGIASVVCVVALG), 519 to 539 (ACVAVIALIVGGIGVMNIMLV), 571 to 591 (MICTIGAILGVILSIFVIFAF), and 604 to 624 (AYSVLLGLLSSMFIGVVFGFF).

Belongs to the ABC transporter superfamily. Macrolide exporter (TC 3.A.1.122) family. As to quaternary structure, homodimer.

It is found in the cell inner membrane. Its function is as follows. Non-canonical ABC transporter that contains transmembrane domains (TMD), which form a pore in the inner membrane, and an ATP-binding domain (NBD), which is responsible for energy generation. Confers resistance against macrolides. This chain is Macrolide export ATP-binding/permease protein MacB, found in Campylobacter jejuni subsp. jejuni serotype O:23/36 (strain 81-176).